Reading from the N-terminus, the 400-residue chain is D-alanyl-D-alanine carboxypeptidase DacC (400 aa).

The first 27 residues, 1 to 27 (MTQYSSLLRGLAAGSAFLFLFAPTAFA), serve as a signal peptide directing secretion. The active-site Acyl-ester intermediate is the Ser-66. Catalysis depends on Lys-69, which acts as the Proton acceptor. Ser-132 is an active-site residue. Substrate is bound at residue Lys-235. Positions 383–400 (VWDFVMMKFHQWFGSWFS) are required for inner membrane binding.

It belongs to the peptidase S11 family.

Its subcellular location is the cell inner membrane. The enzyme catalyses Preferential cleavage: (Ac)2-L-Lys-D-Ala-|-D-Ala. Also transpeptidation of peptidyl-alanyl moieties that are N-acyl substituents of D-alanine.. Its pathway is cell wall biogenesis; peptidoglycan biosynthesis. Functionally, removes C-terminal D-alanyl residues from sugar-peptide cell wall precursors. The chain is D-alanyl-D-alanine carboxypeptidase DacC (dacC) from Escherichia coli (strain K12).